We begin with the raw amino-acid sequence, 621 residues long: DNA mismatch repair protein MutL (621 aa).

The protein belongs to the DNA mismatch repair MutL/HexB family.

This protein is involved in the repair of mismatches in DNA. It is required for dam-dependent methyl-directed DNA mismatch repair. May act as a 'molecular matchmaker', a protein that promotes the formation of a stable complex between two or more DNA-binding proteins in an ATP-dependent manner without itself being part of a final effector complex. This chain is DNA mismatch repair protein MutL, found in Xylella fastidiosa (strain M12).